We begin with the raw amino-acid sequence, 246 residues long: Adenosylcobinamide-GDP ribazoletransferase (246 aa).

Helical transmembrane passes span 34–54 (IVTF…VALL), 59–79 (CGVP…TGGF), 113–133 (GGLA…ELLL), 136–156 (IHPI…AALL), 181–201 (TLVT…LQGL), and 203–223 (AALI…RTLG).

This sequence belongs to the CobS family. Requires Mg(2+) as cofactor.

It localises to the cell inner membrane. It catalyses the reaction alpha-ribazole + adenosylcob(III)inamide-GDP = adenosylcob(III)alamin + GMP + H(+). The enzyme catalyses alpha-ribazole 5'-phosphate + adenosylcob(III)inamide-GDP = adenosylcob(III)alamin 5'-phosphate + GMP + H(+). The protein operates within cofactor biosynthesis; adenosylcobalamin biosynthesis; adenosylcobalamin from cob(II)yrinate a,c-diamide: step 7/7. Joins adenosylcobinamide-GDP and alpha-ribazole to generate adenosylcobalamin (Ado-cobalamin). Also synthesizes adenosylcobalamin 5'-phosphate from adenosylcobinamide-GDP and alpha-ribazole 5'-phosphate. The chain is Adenosylcobinamide-GDP ribazoletransferase from Klebsiella pneumoniae subsp. pneumoniae (strain ATCC 700721 / MGH 78578).